Consider the following 423-residue polypeptide: Gamma-glutamyl phosphate reductase (423 aa).

This sequence belongs to the gamma-glutamyl phosphate reductase family.

The protein localises to the cytoplasm. It carries out the reaction L-glutamate 5-semialdehyde + phosphate + NADP(+) = L-glutamyl 5-phosphate + NADPH + H(+). It participates in amino-acid biosynthesis; L-proline biosynthesis; L-glutamate 5-semialdehyde from L-glutamate: step 2/2. Functionally, catalyzes the NADPH-dependent reduction of L-glutamate 5-phosphate into L-glutamate 5-semialdehyde and phosphate. The product spontaneously undergoes cyclization to form 1-pyrroline-5-carboxylate. This chain is Gamma-glutamyl phosphate reductase, found in Pseudomonas fluorescens (strain Pf0-1).